The sequence spans 577 residues: Protein O-linked-mannose beta-1,4-N-acetylglucosaminyltransferase 2 (577 aa).

At 1–4 (MNIA) the chain is on the cytoplasmic side. Residues 5 to 25 (AVFNALLVSVLATVLWKYIKL) traverse the membrane as a helical; Signal-anchor for type II membrane protein segment. Residues 26-577 (REHAFMVEEE…PFADVLLCST (552 aa)) lie on the Lumenal side of the membrane. N-linked (GlcNAc...) asparagine glycans are attached at residues Asn-98, Asn-275, Asn-335, and Asn-540. One can recognise a Fibronectin type-III domain in the interval 481-577 (KVRDARCQAS…PFADVLLCST (97 aa)).

Belongs to the glycosyltransferase 61 family.

It localises to the endoplasmic reticulum membrane. The enzyme catalyses 3-O-(alpha-D-mannosyl)-L-threonyl-[protein] + UDP-N-acetyl-alpha-D-glucosamine = 3-O-(N-acetyl-beta-D-glucosaminyl-(1-&gt;4)-alpha-D-mannosyl)-L-threonyl-[protein] + UDP + H(+). It participates in protein modification; protein glycosylation. In terms of biological role, O-linked mannose beta-1,4-N-acetylglucosaminyltransferase that transfers UDP-N-acetyl-D-glucosamine to the 4-position of the mannose to generate N-acetyl-D-glucosamine-beta-1,4-O-D-mannosylprotein. Involved in the biosynthesis of the phosphorylated O-mannosyl trisaccharide (N-acetylgalactosamine-beta-3-N-acetylglucosamine-beta-4-(phosphate-6-)mannose), a carbohydrate structure present in alpha-dystroglycan (DAG1), which is required for binding laminin G-like domain-containing extracellular proteins with high affinity. The polypeptide is Protein O-linked-mannose beta-1,4-N-acetylglucosaminyltransferase 2 (POMGNT2) (Gallus gallus (Chicken)).